A 94-amino-acid polypeptide reads, in one-letter code: Evasin P1104 (94 aa).

Residues 1 to 28 (MASNLFTIFQLAGFVAIVFIVNLHSVSA) form the signal peptide. 3 disulfides stabilise this stretch: Cys48/Cys66, Cys52/Cys68, and Cys62/Cys79. N-linked (GlcNAc...) asparagine glycosylation is present at Asn51.

Its subcellular location is the secreted. Functionally, salivary chemokine-binding protein which binds to host chemokines CXCL1, CXCL2, CXCL3, CXCL5, CXCL6, CXCL12 and CXCL13. This Ixodes ricinus (Common tick) protein is Evasin P1104.